The following is a 413-amino-acid chain: 4-hydroxy-3-methylbut-2-en-1-yl diphosphate synthase (flavodoxin) (413 aa).

Residues C305, C308, C351, and E358 each contribute to the [4Fe-4S] cluster site.

This sequence belongs to the IspG family. [4Fe-4S] cluster serves as cofactor.

It carries out the reaction (2E)-4-hydroxy-3-methylbut-2-enyl diphosphate + oxidized [flavodoxin] + H2O + 2 H(+) = 2-C-methyl-D-erythritol 2,4-cyclic diphosphate + reduced [flavodoxin]. It functions in the pathway isoprenoid biosynthesis; isopentenyl diphosphate biosynthesis via DXP pathway; isopentenyl diphosphate from 1-deoxy-D-xylulose 5-phosphate: step 5/6. Converts 2C-methyl-D-erythritol 2,4-cyclodiphosphate (ME-2,4cPP) into 1-hydroxy-2-methyl-2-(E)-butenyl 4-diphosphate. The polypeptide is 4-hydroxy-3-methylbut-2-en-1-yl diphosphate synthase (flavodoxin) (Bartonella tribocorum (strain CIP 105476 / IBS 506)).